Here is a 139-residue protein sequence, read N- to C-terminus: 6,7-dimethyl-8-ribityllumazine synthase (139 aa).

Residues Phe-11, 42-44, and 66-68 each bind 5-amino-6-(D-ribitylamino)uracil; these read ALE and VVI. 71-72 lines the (2S)-2-hydroxy-3-oxobutyl phosphate pocket; it reads ET. Catalysis depends on His-74, which acts as the Proton donor. Asn-98 contacts 5-amino-6-(D-ribitylamino)uracil. (2S)-2-hydroxy-3-oxobutyl phosphate is bound at residue Arg-112.

Belongs to the DMRL synthase family.

It carries out the reaction (2S)-2-hydroxy-3-oxobutyl phosphate + 5-amino-6-(D-ribitylamino)uracil = 6,7-dimethyl-8-(1-D-ribityl)lumazine + phosphate + 2 H2O + H(+). Its pathway is cofactor biosynthesis; riboflavin biosynthesis; riboflavin from 2-hydroxy-3-oxobutyl phosphate and 5-amino-6-(D-ribitylamino)uracil: step 1/2. Catalyzes the formation of 6,7-dimethyl-8-ribityllumazine by condensation of 5-amino-6-(D-ribitylamino)uracil with 3,4-dihydroxy-2-butanone 4-phosphate. This is the penultimate step in the biosynthesis of riboflavin. This is 6,7-dimethyl-8-ribityllumazine synthase from Zymomonas mobilis subsp. mobilis (strain ATCC 31821 / ZM4 / CP4).